Consider the following 91-residue polypeptide: Cytoplasmic envelopment protein 3 (91 aa).

Gly-2 carries the N-myristoyl glycine; by host lipid modification. Residues 48-81 form a disordered region; it reads NMGTDEYDEEDEGGDGGEGREPQPEVKTTPYPKR. A compositionally biased stretch (acidic residues) spans 52-62; it reads DEYDEEDEGGD.

Belongs to the herpesviridae cytoplasmic envelopment protein 3 family. Interacts with cytoplasmic envelopment protein 2; this interaction is essential for the proper localization of each protein to the assembly complex and thus for the production of infectious virus. Myristoylation and palmitoylation (probably on one or more of the nearby cysteines at the N-terminus) enable membrane-binding and Golgi apparatus-specific targeting and are essential for efficient packaging. Post-translationally, phosphorylated. Phosphorylation does not seem to be required for recycling to the host Golgi apparatus. Packaging is selective for underphosphorylated forms.

It is found in the virion tegument. The protein resides in the virion membrane. The protein localises to the host cell membrane. Its subcellular location is the host Golgi apparatus membrane. In terms of biological role, plays an important role in the cytoplasmic envelopment of tegument proteins and capsids during the assembly and egress processes. Also participates in viral entry at the fusion step probably by regulating the core fusion machinery. The polypeptide is Cytoplasmic envelopment protein 3 (38) (Equus caballus (Horse)).